We begin with the raw amino-acid sequence, 320 residues long: Cytochrome f (320 aa).

The signal sequence occupies residues 1 to 35; it reads MQNRNTFSWVKEQMTRFISVSIMIYVITRTSISNA. Heme contacts are provided by Tyr36, Cys56, Cys59, and His60. A helical membrane pass occupies residues 286–306; the sequence is VQGLLFFLASVILAQIFLVLK.

Belongs to the cytochrome f family. As to quaternary structure, the 4 large subunits of the cytochrome b6-f complex are cytochrome b6, subunit IV (17 kDa polypeptide, petD), cytochrome f and the Rieske protein, while the 4 small subunits are PetG, PetL, PetM and PetN. The complex functions as a dimer. Requires heme as cofactor.

Its subcellular location is the plastid. The protein resides in the chloroplast thylakoid membrane. Its function is as follows. Component of the cytochrome b6-f complex, which mediates electron transfer between photosystem II (PSII) and photosystem I (PSI), cyclic electron flow around PSI, and state transitions. The sequence is that of Cytochrome f from Drimys granadensis.